Consider the following 732-residue polypeptide: 1,4-alpha-glucan branching enzyme GlgB (732 aa).

The active-site Nucleophile is the Asp-409. Glu-462 acts as the Proton donor in catalysis.

It belongs to the glycosyl hydrolase 13 family. GlgB subfamily. In terms of assembly, monomer.

It carries out the reaction Transfers a segment of a (1-&gt;4)-alpha-D-glucan chain to a primary hydroxy group in a similar glucan chain.. The protein operates within glycan biosynthesis; glycogen biosynthesis. Functionally, catalyzes the formation of the alpha-1,6-glucosidic linkages in glycogen by scission of a 1,4-alpha-linked oligosaccharide from growing alpha-1,4-glucan chains and the subsequent attachment of the oligosaccharide to the alpha-1,6 position. The protein is 1,4-alpha-glucan branching enzyme GlgB of Corynebacterium diphtheriae (strain ATCC 700971 / NCTC 13129 / Biotype gravis).